We begin with the raw amino-acid sequence, 321 residues long: CRISPR system ring nuclease SSO1393 (321 aa).

This sequence belongs to the cOA ring nuclease family. Homodimer. Does not require a metal cofactor. is required as a cofactor.

It is found in the cytoplasm. The catalysed reaction is cyclic tetraadenylate = 2 5'-hydroxy-diadenylate 2',3'-cylic phosphate. Its function is as follows. CRISPR (clustered regularly interspaced short palindromic repeat) is an adaptive immune system that provides protection against mobile genetic elements (viruses, transposable elements and conjugative plasmids). CRISPR clusters contain spacers, sequences complementary to antecedent mobile elements, and target invading nucleic acids. CRISPR clusters are transcribed and processed into CRISPR RNA (crRNA). A nuclease that degrades cyclic oligoadenylates (cOA), second messengers that induce an antiviral state important for defense against invading nucleic acids. Destruction of cOA deactivates the Csx1 ribonuclease, preventing uncontrolled degradation of cellular RNA. Slowly degrades cA4 (a tetraadenylate ring) into first a linear tetraadenylate product and secondly into a linear diadenylate product with 5'-OH and 2',3'-cyclic phosphate termini. Is 10-fold less active than SSO2081, suggesting it plays a minor role in cA4 degradation. There may be 2 active sites per homodimer. This chain is CRISPR system ring nuclease SSO1393, found in Saccharolobus solfataricus (strain ATCC 35092 / DSM 1617 / JCM 11322 / P2) (Sulfolobus solfataricus).